A 251-amino-acid polypeptide reads, in one-letter code: uncharacterized protein (251 aa).

3 N-linked (GlcNAc...) asparagine; by host glycosylation sites follow: N149, N152, and N207. Residues 226–246 (YLIFIIIIIIFIILILLWIKY) traverse the membrane as a helical segment.

This sequence belongs to the glycosyltransferase 32 family.

It is found in the membrane. This is an uncharacterized protein from Acanthamoeba polyphaga (Amoeba).